The sequence spans 157 residues: SsrA-binding protein (157 aa).

A compositionally biased stretch (basic and acidic residues) spans 134–151; it reads HDKRETEKKRDWSKEKGR. A disordered region spans residues 134–157; sequence HDKRETEKKRDWSKEKGRLMRAKG.

It belongs to the SmpB family.

It is found in the cytoplasm. Functionally, required for rescue of stalled ribosomes mediated by trans-translation. Binds to transfer-messenger RNA (tmRNA), required for stable association of tmRNA with ribosomes. tmRNA and SmpB together mimic tRNA shape, replacing the anticodon stem-loop with SmpB. tmRNA is encoded by the ssrA gene; the 2 termini fold to resemble tRNA(Ala) and it encodes a 'tag peptide', a short internal open reading frame. During trans-translation Ala-aminoacylated tmRNA acts like a tRNA, entering the A-site of stalled ribosomes, displacing the stalled mRNA. The ribosome then switches to translate the ORF on the tmRNA; the nascent peptide is terminated with the 'tag peptide' encoded by the tmRNA and targeted for degradation. The ribosome is freed to recommence translation, which seems to be the essential function of trans-translation. This is SsrA-binding protein from Rhodopseudomonas palustris (strain BisA53).